The chain runs to 359 residues: Histidinol-phosphate aminotransferase (359 aa).

The residue at position 217 (Lys-217) is an N6-(pyridoxal phosphate)lysine.

It belongs to the class-II pyridoxal-phosphate-dependent aminotransferase family. Histidinol-phosphate aminotransferase subfamily. Homodimer. Pyridoxal 5'-phosphate serves as cofactor.

The catalysed reaction is L-histidinol phosphate + 2-oxoglutarate = 3-(imidazol-4-yl)-2-oxopropyl phosphate + L-glutamate. It functions in the pathway amino-acid biosynthesis; L-histidine biosynthesis; L-histidine from 5-phospho-alpha-D-ribose 1-diphosphate: step 7/9. In Salmonella choleraesuis (strain SC-B67), this protein is Histidinol-phosphate aminotransferase.